Here is a 4662-residue protein sequence, read N- to C-terminus: MNSNKNFVNKLYRYYRKNDNYNKKRIFIYENTVYYTPDDCVFCTQLNCTIKKRWDKKKKKKLKSAEKEEYFKDYKYFETENNDNTDEYYKNDEEENEASDLMITYCDRHVSLINILVNMFKIYNKKKTYLNVTLNINYVFLQIIYNIILYFVYLYIYYTKYIYYILRTYLFLLLYNSFHIIRENCYYPNIFLYNYYRNRIKKNILQQWKMKKKKKKKKRKKKKHSLFLCKKNMRDTKSNHFVRNYSYKIIKDSYTNHVDDVIIKFLLYMFYEKFINKFNKYINIHHHYHNVYKKIYYYKIKEGMLPFLCDHIFKCNYNLFYIFNRYNFQFNAYNILLNCKEKNSEQIFIFFNKKFLIKKDYVMNYLIYVINNIREKINKIKIIYDDTKKCYFIFYKNKCTSCLITHNILNVPIEGIKKKSDNIYFEKPKTNIKNEDVNCKYNKIFYKYYISVINDMLCISKNNMIIKNIDSINKNHKRLIKISNYNITNVCMFLLLPEIFCKYYKKGDKKKKKNKNVKKIIFKERRVNIKSYKILLKCEILTHFNFFNVINCDRYIYQNNLYNNLVGLKKGSYMKTCTNDETYRNDGDVNNKNGYNNNEHSNSSNERSNNNGDNNNNNHNNNNHNNNHHNNGSNNHNGNNNSNNDDNDKDDDKKGNDKKNEDKDDENKSDDDNDDDKKNGDGLNRSLDTKKRKEKSKNKNKMKPDNTLNENVKELLFDKEGKSYTCTNNDLSLVNNTICESIKKRKSNRGEKRNYNNEKNDKNSLNNVIAENAYKIIKNGRLYKPTEPVNIFRSHNKFMLKEMMWMSIDYYEEKRWKKNVSKKFGYLMSNHFEEKKKNDKYFISSQISNDIKMFWFFMLNEIRPDLVPVDLDHKIKNKNHLKNDFLNSFRKNLQIEEYNLEMDDNNQYSFNQHDGINEESSVQNKSEKNSFSINTSIDDNWGLMNKMSHQNGKNNNHNDYNNKCEDNKNNDYNNNKCDDNNNNDYNNNKCDDNKNNDYNNKCEDNKNNDYNNNKCDDNNNDDYNNKCDDNNHNDYNNKCDVNKLNNISIEHTNCINSNKYNLLNISTHKEINMIDNNTNDISTVCCENNNNNNNNNNNNERNNHINVMKKKNIIDYENYDQIVMNIEENVNKELLKKHKIYKKDYYTVENVHINHIQYDDNNLYYNDDLYNYYQSKNDDGYLDLSNHLYIYCLLFISISLIEINEHINFSRPDNHLPNDVDNALLEDEQNNSNNNNYNNYNNDIFVNYMNAYNNGELFCNNTQRDNIKFPQYGTFKKIKNEFEDFRELKKKKKTDMLKNNKDGLLSNVDNINLDIIRKGNTEFKENKIVLNNENNVCYPNAKRNSIMDKDIYENEKDINNCENNILRGKQENIKNYEENKMIETYYDEMLLKKKSINQLRLISEEMLLSKRENDNGNDYKNKNFIDHYDEENYNGYDKLNKYVNKRILSIDNNNNNNNIENKLDSFVVHKNMNNSNIYNILSVPSLNNTDVKDLVVIPYSCDNNNNNNNSNNNNSNSNNNSNSNIKTKESVSTTNHNNSSNNIIYENIKNDYINEIKEKNVNVYLHNMELYGGIPYPFEYKYIDDFYDDINLPLMNLAEYDKYTFFLYLFYMKNSSYILKKQMKKDKRKRKKEFTDVLLTKKRTPKRKINKLENEKKIEQIEDAEKVLSSEKVVDGENILKVINDQNNLSNEVNIIKDVTISGTKINSKNNDKSDDKNDDKNDKKNDGKNDKNDEKDDNKTGEKGDNKIGEKDDNKINEKDDNKINDKEIVGTVLRTSTKNKTKNKLKNKDGYVIKKEHLGDLEERQQKKIKKKEMETIKKWKEKKDEWELEETNFLLILTKTYMNYINMDEIIKREYGISLNSCTALGDIKNKNNMNNMNNMNNMNNMNNMNNMNNMNNIDETDNGNNINIENNVYNSNNGNINNVVEIKNANNSKTKEHEEINNDNSNVENKNVTNDFIKKYKGHEYIMSFNKFENNINNKLKNYTDFINWNIISVALVSYNKISHIYEKKRGPNECKEKFLSLIKDDIYKITKLQNLYHDYYLNTIKNNNSMKRKKKKCITKVKFLPLFSSNNVNKLIGMFNKYMNEKLKKYELKKMDMNNNNKIETLKVKNIIIKNEKIEEKKHDEEINILNKNDDKINEYKDELNVKDEDIHLIKKVKKKSSIIKKKKKGFFHNLFSTFSGKKSRESSEEDTDCGRDSFFSCSDVEISATKLDDSCISFSNNKNKSNKKKRAKKNIKLGEEENESECNNEGECNNEGECNNEGECNNEGECNNEGECNNEGEGNNESEIASTKKELLDINNKINDENDNHNFNKKRSSISYYFDDYFDEHFEDYLDDYFEDEWDDYVDENFVDNSDEFFEEDVNEFKKINNIDENTTNNNSTDIIKKNEKNNIEHIKELNNTYVDENSHIEKKEPTICVNIKNSTNENNNILINNDTFKSKDEKKDTYNKEVCVNSISQLIIYNKCKDDEYKYDFNYILKNRDKIKKWLNCICKNKKNIKEFMNIINNDYFVKNKYFHRLIESVVNNVSKEQSSFTYSNNIIINSLNKEPDYELTYRENSNDRNINNPLDNEFIKMIRKIMEYDKKRKLKSIQKLKNISNNYSYNTINEFYISKPNESYNTVNEFVQKILNYVPYVDDKKKIIIKKIRKRFQCKNLITQILLADYILDKLKNFPINESIESSKNNNKTIDMLLSETRLKAYSKYINEHFNDNYDPVKIETSFLKMFSSENDELYKKNILNNNNNKEVTHINIKSEEVALNKSIQETTNTVLKDTIIESNEISCIVDKTVDIHNEQNDKKHDTSPADINNKDYIGYMHVNKKELVSMQNSSNPSDIIQQCVNKVEVYNKDVCQTNGYMNINDDNKMNNFVNNNITHINNNVNNNNNIVNHLNNNNNNNNANNINNLNVNHLNNNISQINNNYNNSNMSSIYIASDQNEHFNKMTVMEKQDPMNNTKQRSHSSYHTSFPMQNNNTPLYNKLEGDQIKLSKYNSLESNKNNIDIISTNNNATKTKDHVIKANNKGSTRGKRQTLSLVKPHKESEHVQDSSVINQPVKNVSSKGEEIILGNNRQKSQPIKNVDITNKMTKYKTSVSSSILSSDKLKNNNILNTVQNESAYLSSKFNSNVQTLNNNVNNNVNINVNNMNSNISNNMNSNINNNMNSNMCNNMNSNMSNNMNSNMHVMDQGSFFTSNMVNREVNNLLNEEQRINTNVVSSHYNSVVSSTQFINDRGNYTNRIQKILSNNKYSLTPMKNNITQENMNNCIVNHQTPNKNIQEYYIPNASPNKLNKSISNVDIMKSNTSSILYPQAHNSVSSNFNNVSETLQNVNVLHASKKYHMNNSNDICTNINNNNNNNNNNNNNNNNNVHHNSMNQNNMNTINMNNINMNNINMNNITMNNINMNNINMNNINMNNTNNNVNNINMNNINSNVNNINNSMNNINISNNINYNISNNYNNSVSMYNIPNKEDDKFISPLHSSMQNNKYMPINRNNSSMSYNKTPICDSVELPIKQMSGNISNNCNASMQLEVSSNSSSKKLQHTIGSNTINTDKKSLLMYIENRARTGSSSINKINDDMFSIKSSTPSNYPPSYTTHQQFISESENKSNLYHDQMLNQDVIMDNKNVQNFTYAPCSNSLNNNLKNTNTMNNETRSNIISNYKQVKYSNISVNNTPNNVIMQTQNMTVQNNAKMSLNGSTTHPIVNRTNMENIDLIKLANDPLNIHRNGIHMGNIKNDNIEEKKNVSSNIRSIADNSQRLQNIHLGNQQNDIQHMNLDNINNNNNNNNLKMKKKSKNNININNNPNNNLNNNGQIDNAYLNVSPTISNSLQQTNMYQSDMKNSIIYNSSIQEKDPNNRNYNTQGNNVQTMNQSNGNVYNVNVPNRKQSNLNQYVNPMNFLIQVLNKCNSNTNGQVKASASNANVNYANVNSTSLNQPNINNVGMNQPNINNVGMNQPNINNVGMNQPNINNVGMNQPNINNVSMNQPNINNVNMNQPNINNVSMNQPNINNFSMNQSNTNNFNMNKPSTSSFSMNQPSTNNFSMNKSSTNNFSINQTSANNFSMHQPSTNNFSMNKPSTNNFSTNKPSTNNFSMNQPNINNISMNQPNTNNVHMNNLNMNQSGMNHTNMTSPIFNQSNSSKQSVNENAFVPPAYHTSNIIQKNATSVYNDNFNNPNVVNVGLKNTMTKNIIQRVPQKKGYSTHDMNQQERLQQERLQQERLQQERLQQERLQQERLQQERLQQERLQQERLQQERLQQERLQQERLQQKWEQQKIQQELYQKSHNDKESETNNSSSYQELNNHTLQENTIAKDSMRQHIFLKTRQQENIPKELQKMHSHQLQTEKMKTQQLSAHSLQQQMYPQQMTSQVHSSFHAQKIKQQLQQQMNHQQINKHQMNQQQMNKQQMNQQQINQQQMNQQQINQQQINQQQINQQQINQQQINQQQINQQQINQQQINQQQINQQQINQQSMSKYPYQAQEIKKHMDQLQQNVSIVTQQKMQPIYSVKQNMPFNEENEMKRNTRKITLPMTHQIPNVPNIQQQINNKMDERMSTENINENNLYNMMNRKLSTSINKFNNHDQYYPYDSYQQQQLQGNNINVMDIRNVDKNENNIFLLKNNQSRDIQNNCTNIMMNNNIPSSYITPGQAYKLNSNQNINHTQQKK.

The next 2 membrane-spanning stretches (helical) occupy residues isoleucine 136–isoleucine 156 and tyrosine 161–isoleucine 181. The stretch at isoleucine 466–asparagine 489 is one LRR 1 repeat. The disordered stretch occupies residues tyrosine 583–glutamate 710. Low complexity predominate over residues asparagine 590–asparagine 644. Basic and acidic residues predominate over residues aspartate 650 to glutamate 666. Basic residues predominate over residues lysine 690–lysine 701. In terms of domain architecture, HSA spans tyrosine 783–phenylalanine 856. Residues glycine 942–asparagine 967 form a disordered region. An LRR 2 repeat occupies asparagine 1150–tyrosine 1172. Over residues asparagine 1505–asparagine 1524 the composition is skewed to low complexity. Disordered stretches follow at residues asparagine 1505 to serine 1540 and lysine 1705 to aspartate 1761. Over residues asparagine 1710–aspartate 1761 the composition is skewed to basic and acidic residues. 2 LRR repeats span residues isoleucine 2063 to lysine 2086 and aspartate 2129 to aspartate 2153. Residues lysine 2228–glutamate 2261 form a disordered region. The segment covering lysine 2230–isoleucine 2241 has biased composition (basic residues). Over residues glutamate 2246–glutamate 2261 the composition is skewed to acidic residues. LRR repeat units lie at residues leucine 2672 to aspartate 2695, asparagine 2773 to isoleucine 2796, isoleucine 2864 to asparagine 2888, and alanine 2904 to serine 2929. The segment at methionine 2956–asparagine 2975 is disordered. LRR repeat units follow at residues glutamine 3377–methionine 3400, asparagine 3438–serine 3461, serine 3756–asparagine 3781, glutamine 3935–asparagine 3960, glutamine 3965–glutamine 3985, and proline 3986–asparagine 4010. Residues aspartate 4203 to glutamine 4272 are a coiled coil. LRR repeat units follow at residues tyrosine 4296–lysine 4321 and glutamine 4333–glutamine 4357. The tract at residues glutamine 4384–glutamine 4412 is disordered.

The protein localises to the membrane. The polypeptide is Protein PF3D7_1417600 (Plasmodium falciparum (isolate 3D7)).